The following is a 155-amino-acid chain: uncharacterized protein (155 aa).

The next 5 membrane-spanning stretches (helical) occupy residues 4–24 (IVGALAVFVITYALFSAAGYL), 46–66 (AIGIIWAILFALISLSAAIVY), 77–97 (FWFTLLINYVLNQAFSYFQFT), 101–121 (LLAASLDCLLVAITAIVLLII), and 130–150 (SYLLLPYFLWSAFATFLSFTI).

The protein belongs to the TspO/BZRP family.

Its subcellular location is the cell membrane. This is an uncharacterized protein from Bacillus subtilis (strain 168).